The following is a 464-amino-acid chain: Uronate isomerase (464 aa).

Belongs to the metallo-dependent hydrolases superfamily. Uronate isomerase family.

It carries out the reaction D-glucuronate = D-fructuronate. The enzyme catalyses aldehydo-D-galacturonate = keto-D-tagaturonate. It participates in carbohydrate metabolism; pentose and glucuronate interconversion. The protein is Uronate isomerase of Caldicellulosiruptor bescii (strain ATCC BAA-1888 / DSM 6725 / KCTC 15123 / Z-1320) (Anaerocellum thermophilum).